Reading from the N-terminus, the 345-residue chain is Phosphoribosylformylglycinamidine cyclo-ligase (345 aa).

This sequence belongs to the AIR synthase family.

The protein localises to the cytoplasm. It carries out the reaction 2-formamido-N(1)-(5-O-phospho-beta-D-ribosyl)acetamidine + ATP = 5-amino-1-(5-phospho-beta-D-ribosyl)imidazole + ADP + phosphate + H(+). It participates in purine metabolism; IMP biosynthesis via de novo pathway; 5-amino-1-(5-phospho-D-ribosyl)imidazole from N(2)-formyl-N(1)-(5-phospho-D-ribosyl)glycinamide: step 2/2. In Synechococcus sp. (strain CC9902), this protein is Phosphoribosylformylglycinamidine cyclo-ligase.